A 433-amino-acid polypeptide reads, in one-letter code: Glutamate-1-semialdehyde 2,1-aminomutase (433 aa).

K272 bears the N6-(pyridoxal phosphate)lysine mark.

It belongs to the class-III pyridoxal-phosphate-dependent aminotransferase family. HemL subfamily. As to quaternary structure, homodimer. It depends on pyridoxal 5'-phosphate as a cofactor.

The protein localises to the cytoplasm. The enzyme catalyses (S)-4-amino-5-oxopentanoate = 5-aminolevulinate. It functions in the pathway porphyrin-containing compound metabolism; protoporphyrin-IX biosynthesis; 5-aminolevulinate from L-glutamyl-tRNA(Glu): step 2/2. This chain is Glutamate-1-semialdehyde 2,1-aminomutase, found in Magnetococcus marinus (strain ATCC BAA-1437 / JCM 17883 / MC-1).